The sequence spans 262 residues: Global transcriptional regulator CodY (262 aa).

The tract at residues 1–159 (MAHLLEKTRK…ASTVVGIQLL (159 aa)) is GAF domain. Residues 207-226 (ASVIADRIGITRSVIVNALR) constitute a DNA-binding region (H-T-H motif).

Belongs to the CodY family.

The protein resides in the cytoplasm. In terms of biological role, DNA-binding global transcriptional regulator which is involved in the adaptive response to starvation and acts by directly or indirectly controlling the expression of numerous genes in response to nutrient availability. During rapid exponential growth, CodY is highly active and represses genes whose products allow adaptation to nutrient depletion. This is Global transcriptional regulator CodY from Streptococcus pneumoniae serotype 4 (strain ATCC BAA-334 / TIGR4).